A 279-amino-acid polypeptide reads, in one-letter code: Alcohol dehydrogenase-related 31 kDa protein (279 aa).

Position 11-34 (11-34 (YVADCGGIALETSKVLMTKNIAKL)) interacts with NAD(+). Residue Ser-139 participates in substrate binding. Tyr-152 acts as the Proton acceptor in catalysis.

It belongs to the short-chain dehydrogenases/reductases (SDR) family.

This chain is Alcohol dehydrogenase-related 31 kDa protein (Adhr), found in Drosophila madeirensis (Fruit fly).